A 348-amino-acid chain; its full sequence is Flagellar P-ring protein (348 aa).

A signal peptide spans 1–16 (MRVLTIFLLFMTSIFA).

The protein belongs to the FlgI family. The basal body constitutes a major portion of the flagellar organelle and consists of four rings (L,P,S, and M) mounted on a central rod.

The protein resides in the periplasm. The protein localises to the bacterial flagellum basal body. Functionally, assembles around the rod to form the L-ring and probably protects the motor/basal body from shearing forces during rotation. In Campylobacter jejuni subsp. doylei (strain ATCC BAA-1458 / RM4099 / 269.97), this protein is Flagellar P-ring protein.